The sequence spans 122 residues: Small ribosomal subunit protein uS13 (122 aa).

The disordered stretch occupies residues Arg99–Lys122.

Belongs to the universal ribosomal protein uS13 family. Part of the 30S ribosomal subunit. Forms a loose heterodimer with protein S19. Forms two bridges to the 50S subunit in the 70S ribosome.

In terms of biological role, located at the top of the head of the 30S subunit, it contacts several helices of the 16S rRNA. In the 70S ribosome it contacts the 23S rRNA (bridge B1a) and protein L5 of the 50S subunit (bridge B1b), connecting the 2 subunits; these bridges are implicated in subunit movement. Contacts the tRNAs in the A and P-sites. The chain is Small ribosomal subunit protein uS13 from Sinorhizobium medicae (strain WSM419) (Ensifer medicae).